A 396-amino-acid polypeptide reads, in one-letter code: S-adenosylmethionine synthase (396 aa).

Mg(2+) is bound at residue Glu-12. Residue His-18 participates in ATP binding. Position 46 (Glu-46) interacts with K(+). Glu-59 and Gln-102 together coordinate L-methionine. Residues 170–172 (DGK), 238–241 (SGRF), Asp-249, 255–256 (RK), Ala-272, Lys-276, and Lys-280 each bind ATP. L-methionine is bound at residue Asp-249. Lys-280 serves as a coordination point for L-methionine.

It belongs to the AdoMet synthase family. As to quaternary structure, homotetramer. Mn(2+) is required as a cofactor. The cofactor is Mg(2+). Requires Co(2+) as cofactor. K(+) serves as cofactor.

The protein localises to the cytoplasm. The enzyme catalyses L-methionine + ATP + H2O = S-adenosyl-L-methionine + phosphate + diphosphate. It functions in the pathway amino-acid biosynthesis; S-adenosyl-L-methionine biosynthesis; S-adenosyl-L-methionine from L-methionine: step 1/1. Functionally, catalyzes the formation of S-adenosylmethionine from methionine and ATP. The reaction comprises two steps that are both catalyzed by the same enzyme: formation of S-adenosylmethionine (AdoMet) and triphosphate, and subsequent hydrolysis of the triphosphate. This chain is S-adenosylmethionine synthase (SAMS), found in Triticum aestivum (Wheat).